The following is a 240-amino-acid chain: MSDIKDGNNDHLVESDDPEHPANLIPALCRNFYSHGWVTGTGGGASIKRDNHIFIAPSGVQKELIQPHNIFVLSYPTPKYPPSARQYIRKPLKLNPSACTPLFLAAFERGAGCCIHTHSQWAVLVTLLVEREKGPEGCFEISNIEQIKGIPRGKGKGMMGFYDTLKIPIIENTAFEEDLTQSLEEAMEMYPDTYAVLVRRHGIYVWGDDVAKAKTQCESLDYLFQLAVEMHRLGLPWVKS.

Cysteine 99 serves as a coordination point for substrate. 2 residues coordinate Zn(2+): histidine 116 and histidine 118. The active-site Proton donor/acceptor is glutamate 145. Position 201 (histidine 201) interacts with Zn(2+).

The protein belongs to the aldolase class II family. MtnB subfamily. The cofactor is Zn(2+).

The protein resides in the cytoplasm. The catalysed reaction is 5-(methylsulfanyl)-D-ribulose 1-phosphate = 5-methylsulfanyl-2,3-dioxopentyl phosphate + H2O. Its pathway is amino-acid biosynthesis; L-methionine biosynthesis via salvage pathway; L-methionine from S-methyl-5-thio-alpha-D-ribose 1-phosphate: step 2/6. Its function is as follows. Catalyzes the dehydration of methylthioribulose-1-phosphate (MTRu-1-P) into 2,3-diketo-5-methylthiopentyl-1-phosphate (DK-MTP-1-P). The polypeptide is Methylthioribulose-1-phosphate dehydratase (Paracoccidioides brasiliensis (strain Pb18)).